The primary structure comprises 613 residues: Ribosome-associated molecular chaperone SSB1 (613 aa).

A nucleotide binding domain (NBD) region spans residues 1–391 (MAEGVFQGAI…ILTGQSTSED (391 aa)). ATP is bound by residues 16–18 (TTY), K73, 205–207 (GGT), 271–278 (ERAKRTLS), and G342. The tract at residues 392–402 (TKDLLLLDVAP) is inter-domain linker. The tract at residues 403 to 613 (LSLGVGMQGD…RVVTKAMSSR (211 aa)) is substrate binding domain (SBD). The tract at residues 516–612 (SDEIEKMVNQ…KRVVTKAMSS (97 aa)) is lid domain (SBDalpha). Residues 574–582 (IESALSDAL) carry the Nuclear export signal motif.

Belongs to the heat shock protein 70 family. Ssb-type Hsp70 subfamily. As to quaternary structure, binds to ribosomes. Binds close to the ribosomal tunnel exit via contacts with both ribosomal proteins and rRNA. Directly interacts with nascent polypeptides. This interaction is dependent on the ribosome-associated complex (RAC). Interacts with SSE1. Interacts with FES1.

The protein localises to the cytoplasm. The enzyme catalyses ATP + H2O = ADP + phosphate + H(+). In terms of biological role, ribosome-bound, Hsp70-type chaperone that assists in the cotranslational folding of newly synthesized proteins in the cytosol. Stimulates folding by interacting with nascent chains, binding to short, largely hydrophobic sequences exposed by unfolded proteins, thereby stabilizing longer, more slowly translated, and aggregation-prone nascent polypeptides and domains that cannot fold stably until fully synthesized. The Hsp70-protein substrate interaction depends on ATP-binding and on allosteric regulation between the NBD and the SBD. The ATP-bound state is characterized by a fast exchange rate of substrate (low affinity state), while in the ADP-bound state exchange is much slower (high affinity state). During the Hsp70 cycle, the chaperone switches between the ATP-bound state (open conformation) and the ADP-bound state (closed conformation) by major conformational rearrangements involving mainly the lid domain. Ssb cooperates with a specific Hsp40/Hsp70 co-chaperone termed the ribosome-associated complex (RAC), which stimulates the ATPase activity of the ribosome-associated pool of Ssbs and switches it to the high affinity substrate binding state. Hsp110 chaperone SSE1 and FES1 act as nucleotide exchange factors that cause substrate release. This chain is Ribosome-associated molecular chaperone SSB1 (SSB1), found in Zygosaccharomyces rouxii (strain ATCC 2623 / CBS 732 / NBRC 1130 / NCYC 568 / NRRL Y-229).